A 195-amino-acid chain; its full sequence is ATP-dependent Clp protease proteolytic subunit (195 aa).

Ser-101 (nucleophile) is an active-site residue. The active site involves His-126.

The protein belongs to the peptidase S14 family. In terms of assembly, component of the chloroplastic Clp protease core complex.

It is found in the plastid. The protein resides in the chloroplast stroma. The catalysed reaction is Hydrolysis of proteins to small peptides in the presence of ATP and magnesium. alpha-casein is the usual test substrate. In the absence of ATP, only oligopeptides shorter than five residues are hydrolyzed (such as succinyl-Leu-Tyr-|-NHMec, and Leu-Tyr-Leu-|-Tyr-Trp, in which cleavage of the -Tyr-|-Leu- and -Tyr-|-Trp bonds also occurs).. Functionally, cleaves peptides in various proteins in a process that requires ATP hydrolysis. Has a chymotrypsin-like activity. Plays a major role in the degradation of misfolded proteins. This Cucumis sativus (Cucumber) protein is ATP-dependent Clp protease proteolytic subunit.